The primary structure comprises 873 residues: Bifunctional uridylyltransferase/uridylyl-removing enzyme (873 aa).

Positions 1–332 (MKYLSPLSLS…HQGEQDDAII (332 aa)) are uridylyltransferase. Residues 333–692 (IDDDFQRRGR…ISKNASRGGT (360 aa)) are uridylyl-removing. The HD domain occupies 451-573 (VDEHSIRLLK…VRDEERLDYL (123 aa)). 2 ACT domains span residues 693 to 777 (EIFV…RPPR) and 800 to 873 (LMEF…RLSS).

It belongs to the GlnD family. Mg(2+) serves as cofactor.

The enzyme catalyses [protein-PII]-L-tyrosine + UTP = [protein-PII]-uridylyl-L-tyrosine + diphosphate. It catalyses the reaction [protein-PII]-uridylyl-L-tyrosine + H2O = [protein-PII]-L-tyrosine + UMP + H(+). Uridylyltransferase (UTase) activity is inhibited by glutamine, while glutamine activates uridylyl-removing (UR) activity. In terms of biological role, modifies, by uridylylation and deuridylylation, the PII regulatory proteins (GlnB and homologs), in response to the nitrogen status of the cell that GlnD senses through the glutamine level. Under low glutamine levels, catalyzes the conversion of the PII proteins and UTP to PII-UMP and PPi, while under higher glutamine levels, GlnD hydrolyzes PII-UMP to PII and UMP (deuridylylation). Thus, controls uridylylation state and activity of the PII proteins, and plays an important role in the regulation of nitrogen assimilation and metabolism. The sequence is that of Bifunctional uridylyltransferase/uridylyl-removing enzyme from Aliivibrio fischeri (strain MJ11) (Vibrio fischeri).